We begin with the raw amino-acid sequence, 854 residues long: Protein mono-ADP-ribosyltransferase PARP9 (854 aa).

Macro domains are found at residues 107–296 (LQVF…EFIL) and 306–487 (TPSF…AKRS). Positions 628-850 (IQQQKTQDEM…QHPWRGFASG (223 aa)) constitute a PARP catalytic domain.

It belongs to the ARTD/PARP family. As to quaternary structure, forms a stable complex with E3 ligase DTX3L; the interaction is required for PARP9 mediated ADP-ribosylation of ubiquitin. Interacts (via PARP catalytic domain) with DTX3L (via N-terminus). Forms a complex with STAT1 and DTX3L independently of IFNB1 or IFNG-mediated STAT1 'Tyr-701' phosphorylation. Forms a complex with STAT1, DTX3L and histone H2B H2BC9/H2BJ; the interaction is likely to induce H2BC9/H2BJ ubiquitination. Interacts (via N-terminus) with STAT1. Interacts with PARP14 in IFNG-stimulated macrophages; the interaction prevents PARP14-mediated STAT1 and STAT6 ADP-riboslylation. Interacts with PARP1 (when poly-ADP-ribosylated). Post-translationally, ADP-ribosylated by PARP14. Expressed in lymphocyte-rich tissues, spleen, lymph nodes, peripheral blood lymphocytes and colonic mucosa. Expressed in macrophages. Also expressed in nonhematopoietic tissues such as heart and skeletal muscle. Isoform 2 is the predominant form. Most abundantly expressed in lymphomas with a brisk host inflammatory response. In diffuse large B-cell lymphomas tumors, expressed specifically by malignant B-cells.

It localises to the cytoplasm. It is found in the cytosol. The protein localises to the nucleus. It catalyses the reaction [protein]-C-terminal glycine + NAD(+) = [protein]-C-terminal O-(ADP-D-ribosyl)-glycine + nicotinamide. Binding to poly(ADP-ribose) does not affect its activity. In terms of biological role, ADP-ribosyltransferase which, in association with E3 ligase DTX3L, plays a role in DNA damage repair and in immune responses including interferon-mediated antiviral defenses. Within the complex, enhances DTX3L E3 ligase activity which is further enhanced by PARP9 binding to poly(ADP-ribose). In association with DTX3L and in presence of E1 and E2 enzymes, mediates NAD(+)-dependent mono-ADP-ribosylation of ubiquitin which prevents ubiquitin conjugation to substrates such as histones. During DNA repair, PARP1 recruits PARP9/BAL1-DTX3L complex to DNA damage sites via PARP9 binding to ribosylated PARP1. Subsequent PARP1-dependent PARP9/BAL1-DTX3L-mediated ubiquitination promotes the rapid and specific recruitment of 53BP1/TP53BP1, UIMC1/RAP80, and BRCA1 to DNA damage sites. In response to DNA damage, PARP9-DTX3L complex is required for efficient non-homologous end joining (NHEJ); the complex function is negatively modulated by PARP9 activity. Dispensable for B-cell receptor (BCR) assembly through V(D)J recombination and class switch recombination (CSR). In macrophages, positively regulates pro-inflammatory cytokines production in response to IFNG stimulation by suppressing PARP14-mediated STAT1 ADP-ribosylation and thus promoting STAT1 phosphorylation. Also suppresses PARP14-mediated STAT6 ADP-ribosylation. The polypeptide is Protein mono-ADP-ribosyltransferase PARP9 (PARP9) (Homo sapiens (Human)).